Here is a 125-residue protein sequence, read N- to C-terminus: Small ribosomal subunit protein uS12 (125 aa).

Residues 1-28 (MPTINQLVRKGREKVKKKSKAPALEGNP) are disordered. Residues 9–20 (RKGREKVKKKSK) are compositionally biased toward basic residues. Residue Asp89 is modified to 3-methylthioaspartic acid. A disordered region spans residues 104-125 (AAGVKDRKQSRSKYGTKRPKEK). The span at 113-125 (SRSKYGTKRPKEK) shows a compositional bias: basic residues.

It belongs to the universal ribosomal protein uS12 family. As to quaternary structure, part of the 30S ribosomal subunit. Contacts proteins S8 and S17. May interact with IF1 in the 30S initiation complex.

Functionally, with S4 and S5 plays an important role in translational accuracy. Its function is as follows. Interacts with and stabilizes bases of the 16S rRNA that are involved in tRNA selection in the A site and with the mRNA backbone. Located at the interface of the 30S and 50S subunits, it traverses the body of the 30S subunit contacting proteins on the other side and probably holding the rRNA structure together. The combined cluster of proteins S8, S12 and S17 appears to hold together the shoulder and platform of the 30S subunit. In Persephonella marina (strain DSM 14350 / EX-H1), this protein is Small ribosomal subunit protein uS12.